The chain runs to 229 residues: Large ribosomal subunit protein uL1 (229 aa).

This sequence belongs to the universal ribosomal protein uL1 family. Part of the 50S ribosomal subunit.

Binds directly to 23S rRNA. The L1 stalk is quite mobile in the ribosome, and is involved in E site tRNA release. Its function is as follows. Protein L1 is also a translational repressor protein, it controls the translation of the L11 operon by binding to its mRNA. The sequence is that of Large ribosomal subunit protein uL1 from Magnetococcus marinus (strain ATCC BAA-1437 / JCM 17883 / MC-1).